A 678-amino-acid chain; its full sequence is THO complex subunit 5 homolog B (678 aa).

Disordered stretches follow at residues 1-37 (MSSD…EEAE) and 294-329 (ALFK…VQLD). A Nuclear localization signal motif is present at residues 7–10 (KKRK). The segment covering 14–37 (NRSEDGKRGRHDEQEGRYYSEEAE) has biased composition (basic and acidic residues). Over residues 301-314 (DSQDDESDSDAEEE) the composition is skewed to acidic residues.

The protein belongs to the THOC5 family. In terms of assembly, component of the THO subcomplex, which is composed of thoc1, thoc2, thoc3, thoc5, thoc6 and thoc7. Component of the transcription/export (TREX) complex at least composed of alyref/thoc4, ddx39b, sarnp/cip29, chtop and the THO subcomplex. Interacts with thoc7.

It localises to the nucleus. The protein localises to the nucleus speckle. It is found in the cytoplasm. Its function is as follows. Component of the THO subcomplex of the TREX complex which is thought to couple mRNA transcription, processing and nuclear export, and which specifically associates with spliced mRNA and not with unspliced pre-mRNA. Plays a key structural role in the oligomerization of the THO-ddx39b complex. TREX is recruited to spliced mRNAs by a transcription-independent mechanism, binds to mRNA upstream of the exon-junction complex (EJC) and is recruited in a splicing- and cap-dependent manner to a region near the 5' end of the mRNA where it functions in mRNA export to the cytoplasm via the TAP/NXF1 pathway. May be involved in cell differentiation. The sequence is that of THO complex subunit 5 homolog B (thoc5-b) from Xenopus laevis (African clawed frog).